The primary structure comprises 195 residues: Myelin basic protein (195 aa).

Ala2 carries the post-translational modification N-acetylalanine. Phosphoserine occurs at positions 8 and 13. Phosphotyrosine is present on Tyr15. At Thr18 the chain carries Phosphothreonine. Ser20 carries the phosphoserine modification. Residue Thr21 is modified to Phosphothreonine. A citrulline mark is found at Arg26 and Arg32. The residue at position 36 (Thr36) is a Phosphothreonine. Ser41 carries the phosphoserine modification. An omega-N-methylarginine mark is found at Arg44 and Arg50. The disordered stretch occupies residues 45–79 (FFSGDRGAPKRGSGKVPWLKQSRSPLPSHARSRPG). At Ser57 the chain carries Phosphoserine. The residue at position 92 (Thr92) is a Phosphothreonine. Residue Tyr94 is modified to Phosphotyrosine. Position 101 is a phosphoserine (Ser101). Thr104, Thr119, and Thr122 each carry phosphothreonine. Residues 117–139 (IVTPRTPPPSQGKGRGLSLSRFS) are disordered. Gln127 is modified (deamidated glutamine). Omega-N-methylarginine; alternate is present on Arg131. At Arg131 the chain carries Symmetric dimethylarginine; alternate. Ser139 carries the post-translational modification Phosphoserine. Lys146 bears the N6-acetyllysine mark. Arg154 carries the post-translational modification Citrulline. Gln172 carries the post-translational modification Deamidated glutamine. Arg184 bears the Citrulline mark. At Ser186 the chain carries Phosphoserine. Phosphoserine; by UHMK1 is present on Ser190. The residue at position 195 (Arg195) is a Citrulline.

It belongs to the myelin basic protein family. Homodimer. Post-translationally, as in other animals, several charge isomers may be produced as a result of optional post-translational modifications, such as phosphorylation of serine or threonine residues, deamidation of glutamine or asparagine residues, citrullination and methylation of arginine residues. Arg-131 was found to be 44% monomethylated and 11% symmetrically dimethylated. In terms of processing, phosphorylated by TAOK2, VRK2, MAPK11, MAPK12, MAPK14 and MINK1. Post-translationally, proteolytically cleaved in B cell lysosomes by cathepsin CTSG which degrades the major immunogenic MBP epitope and prevents the activation of MBP-specific autoreactive T cells. In terms of tissue distribution, found in both the central and the peripheral nervous system.

The protein resides in the myelin membrane. Its function is as follows. Is, with PLP, the most abundant protein component of the myelin membrane in the CNS. Has a role in both the formation and stabilization of this compact multilayer arrangement of bilayers. Each splice variant and charge isomer may have a specialized function in the assembly of an optimized, biochemically functional myelin membrane. This Rattus norvegicus (Rat) protein is Myelin basic protein (Mbp).